The primary structure comprises 455 residues: Chromosomal replication initiator protein DnaA (455 aa).

The interval 1–73 is domain I, interacts with DnaA modulators; it reads MTISPQYIWN…LEEVETIVGY (73 aa). Residues 73 to 114 form a domain II region; that stretch reads YPIAVKLTTSQEQNLRIVDKNKDNLSSTKLQNKRQQESPKLN. A domain III, AAA+ region region spans residues 115–331; the sequence is QLNPRYNFSR…GALIRAVTYI (217 aa). ATP is bound by residues Gly159, Gly161, Lys162, and Thr163. The tract at residues 332–455 is domain IV, binds dsDNA; sequence SISGLSMTVE…RINIASRNQN (124 aa).

The protein belongs to the DnaA family. As to quaternary structure, oligomerizes as a right-handed, spiral filament on DNA at oriC.

The protein resides in the cytoplasm. Plays an essential role in the initiation and regulation of chromosomal replication. ATP-DnaA binds to the origin of replication (oriC) to initiate formation of the DNA replication initiation complex once per cell cycle. Binds the DnaA box (a 9 base pair repeat at the origin) and separates the double-stranded (ds)DNA. Forms a right-handed helical filament on oriC DNA; dsDNA binds to the exterior of the filament while single-stranded (ss)DNA is stabiized in the filament's interior. The ATP-DnaA-oriC complex binds and stabilizes one strand of the AT-rich DNA unwinding element (DUE), permitting loading of DNA polymerase. After initiation quickly degrades to an ADP-DnaA complex that is not apt for DNA replication. Binds acidic phospholipids. The sequence is that of Chromosomal replication initiator protein DnaA from Crocosphaera subtropica (strain ATCC 51142 / BH68) (Cyanothece sp. (strain ATCC 51142)).